The primary structure comprises 237 residues: Ribosomal RNA small subunit methyltransferase G (237 aa).

S-adenosyl-L-methionine contacts are provided by residues G78, F83, 129-130 (AE), and R148. A disordered region spans residues 216–237 (SKKKETPNKYPRKAGTPNKKPL).

Belongs to the methyltransferase superfamily. RNA methyltransferase RsmG family.

Its subcellular location is the cytoplasm. Its function is as follows. Specifically methylates the N7 position of a guanine in 16S rRNA. This chain is Ribosomal RNA small subunit methyltransferase G, found in Streptococcus agalactiae serotype V (strain ATCC BAA-611 / 2603 V/R).